A 638-amino-acid polypeptide reads, in one-letter code: uncharacterized protein (638 aa).

The CID domain occupies M1–K138. Disordered stretches follow at residues Q318 to S338 and L615 to K638.

This is an uncharacterized protein from Schizosaccharomyces pombe (strain 972 / ATCC 24843) (Fission yeast).